A 1138-amino-acid polypeptide reads, in one-letter code: Phosphatidylserine decarboxylase proenzyme 2 (1138 aa).

A C2 1 domain is found at 1–122 (MRIIKGRKRG…SNSGLSSHSH (122 aa)). Disordered stretches follow at residues 90 to 166 (TGAP…PGST), 269 to 305 (MRSSSSLPPPLEDMLSNSSAVSGNEIRREKPYSDTDL), and 413 to 448 (AVSENDITSVDDEESENQQESDEEFDIYNEDEREDS). Positions 98 to 121 (SRPRTTTANTSSSTLSNSGLSSHS) are enriched in low complexity. The span at 125–135 (RNLNVTSKGNQ) shows a compositional bias: polar residues. Residues 136–166 (TSTSINSVSSSATPAPSHSSSSLSTTGPGST) show a composition bias toward low complexity. Residues 293–305 (EIRREKPYSDTDL) show a composition bias toward basic and acidic residues. The span at 421–448 (SVDDEESENQQESDEEFDIYNEDEREDS) shows a compositional bias: acidic residues. The C2 2 domain occupies 478-600 (RRAKSNFFIS…QQQQHENEWI (123 aa)). Ca(2+)-binding residues include Asp-571, Ser-574, and Asp-577. Residues Asp-899, His-956, and Ser-1043 each act as charge relay system; for autoendoproteolytic cleavage activity in the active site. Residue Ser-1043 is the Schiff-base intermediate with substrate; via pyruvic acid; for decarboxylase activity of the active site. Ser-1043 is subject to Pyruvic acid (Ser); by autocatalysis.

This sequence belongs to the phosphatidylserine decarboxylase family. PSD-B subfamily. Eukaryotic type II sub-subfamily. In terms of assembly, heterodimer of a large membrane-associated beta subunit and a small pyruvoyl-containing alpha subunit. Interacts with pstB2/PDR17. This interaction may be a means to structurally tether the donor membrane (ER) harboring PstB2/PDR17 to acceptor membranes (Golgi/endosomes) harboring PSD2 during PtdSer transport to the site of PtdEtn synthesis. Pyruvate serves as cofactor. Requires Ca(2+) as cofactor. In terms of processing, is synthesized initially as an inactive proenzyme. Formation of the active enzyme involves a self-maturation process in which the active site pyruvoyl group is generated from an internal serine residue via an autocatalytic post-translational modification. Two non-identical subunits are generated from the proenzyme in this reaction, and the pyruvate is formed at the N-terminus of the alpha chain, which is derived from the carboxyl end of the proenzyme. The autoendoproteolytic cleavage occurs by a canonical serine protease mechanism, in which the side chain hydroxyl group of the serine supplies its oxygen atom to form the C-terminus of the beta chain, while the remainder of the serine residue undergoes an oxidative deamination to produce ammonia and the pyruvoyl prosthetic group on the alpha chain. During this reaction, the Ser that is part of the protease active site of the proenzyme becomes the pyruvoyl prosthetic group, which constitutes an essential element of the active site of the mature decarboxylase.

The protein resides in the golgi apparatus membrane. Its subcellular location is the endosome membrane. It catalyses the reaction a 1,2-diacyl-sn-glycero-3-phospho-L-serine + H(+) = a 1,2-diacyl-sn-glycero-3-phosphoethanolamine + CO2. It functions in the pathway phospholipid metabolism; phosphatidylethanolamine biosynthesis; phosphatidylethanolamine from CDP-diacylglycerol: step 2/2. Its function is as follows. Catalyzes the formation of phosphatidylethanolamine (PtdEtn) from phosphatidylserine (PtdSer). Plays a central role in phospholipid metabolism and in the interorganelle trafficking of phosphatidylserine. Phosphatidylethanolamine produced by PSD2 is insufficient to completely provide the PtdEtn pool required by mitochondria under respiratory conditions. PSD2 is also involved in the PtdSer transport step to the site of PtdEtn synthesis on the Golgi/endosome membranes. Required for normal heavy metal resistance. This Saccharomyces cerevisiae (strain ATCC 204508 / S288c) (Baker's yeast) protein is Phosphatidylserine decarboxylase proenzyme 2.